Here is an 82-residue protein sequence, read N- to C-terminus: Exodeoxyribonuclease 7 small subunit (82 aa).

The protein belongs to the XseB family. Heterooligomer composed of large and small subunits.

Its subcellular location is the cytoplasm. It carries out the reaction Exonucleolytic cleavage in either 5'- to 3'- or 3'- to 5'-direction to yield nucleoside 5'-phosphates.. In terms of biological role, bidirectionally degrades single-stranded DNA into large acid-insoluble oligonucleotides, which are then degraded further into small acid-soluble oligonucleotides. This is Exodeoxyribonuclease 7 small subunit from Mycobacterium marinum (strain ATCC BAA-535 / M).